Consider the following 274-residue polypeptide: Caldesmon, smooth muscle (274 aa).

Disordered stretches follow at residues 1 to 102 (SNLK…FSPK) and 179 to 274 (KGNV…EKEP). Basic and acidic residues-rich tracts occupy residues 12–21 (GSEKLKEKQQ) and 28–95 (DELK…EKKP). The span at 182–194 (VFSSPGGTGTPNK) shows a compositional bias: polar residues. Composition is skewed to basic and acidic residues over residues 226–245 (SDLR…KQSV) and 260–274 (KKSE…EKEP).

It is found in the cytoplasm. The protein localises to the cytoskeleton. The protein resides in the myofibril. Its subcellular location is the stress fiber. Control of actomyosin interactions in smooth muscle and nonmuscle cells (could act as a bridge between myosin and actin filaments). Inhibits the actin-activated ATPase of myosin this inhibition is attenuated by calcium-calmodulin and is potentiated by tropomyosin. Interacts with actin, myosin, 2 molecules of tropomyosin and with calmodulin. This is Caldesmon, smooth muscle (CALD1) from Meleagris gallopavo (Wild turkey).